Reading from the N-terminus, the 121-residue chain is Large ribosomal subunit protein bL12 (121 aa).

This sequence belongs to the bacterial ribosomal protein bL12 family. As to quaternary structure, homodimer. Part of the ribosomal stalk of the 50S ribosomal subunit. Forms a multimeric L10(L12)X complex, where L10 forms an elongated spine to which 2 to 4 L12 dimers bind in a sequential fashion. Binds GTP-bound translation factors.

Its function is as follows. Forms part of the ribosomal stalk which helps the ribosome interact with GTP-bound translation factors. Is thus essential for accurate translation. In Pectobacterium atrosepticum (strain SCRI 1043 / ATCC BAA-672) (Erwinia carotovora subsp. atroseptica), this protein is Large ribosomal subunit protein bL12.